A 355-amino-acid chain; its full sequence is Peptide chain release factor 1 (355 aa).

The residue at position 233 (Gln233) is an N5-methylglutamine. A compositionally biased stretch (basic and acidic residues) spans 280-293 (KRRQKEQERSDSRR). The interval 280 to 310 (KRRQKEQERSDSRRGQVGSGDRSERIRTYNF) is disordered.

The protein belongs to the prokaryotic/mitochondrial release factor family. Post-translationally, methylated by PrmC. Methylation increases the termination efficiency of RF1.

It localises to the cytoplasm. Functionally, peptide chain release factor 1 directs the termination of translation in response to the peptide chain termination codons UAG and UAA. This chain is Peptide chain release factor 1 (prfA), found in Rickettsia prowazekii (strain Madrid E).